Reading from the N-terminus, the 436-residue chain is 3-ketoacyl-CoA thiolase (436 aa).

Cysteine 99 (acyl-thioester intermediate) is an active-site residue. Catalysis depends on proton acceptor residues histidine 392 and cysteine 422.

This sequence belongs to the thiolase-like superfamily. Thiolase family. Heterotetramer of two alpha chains (FadJ) and two beta chains (FadI).

It localises to the cytoplasm. The enzyme catalyses an acyl-CoA + acetyl-CoA = a 3-oxoacyl-CoA + CoA. The protein operates within lipid metabolism; fatty acid beta-oxidation. Functionally, catalyzes the final step of fatty acid oxidation in which acetyl-CoA is released and the CoA ester of a fatty acid two carbons shorter is formed. This chain is 3-ketoacyl-CoA thiolase, found in Shewanella pealeana (strain ATCC 700345 / ANG-SQ1).